A 1621-amino-acid polypeptide reads, in one-letter code: ABC transporter A family member 2 (1621 aa).

The next 7 helical transmembrane spans lie at 30-50, 234-254, 276-296, 309-329, 338-358, 365-385, and 405-425; these read ILFP…VMAF, SVFI…DLVI, ISWM…ISII, GVVI…AFIL, FCGL…IFVA, GAKL…IFAM, and NQVI…VWYL. In terms of domain architecture, ABC transporter 1 spans 484–717; it reads ISIRNLRKEY…FGCGYLLTCS (234 aa). 520-527 lines the ATP pocket; it reads GPNGSGKS. A run of 7 helical transmembrane segments spans residues 856 to 876, 1033 to 1053, 1083 to 1103, 1111 to 1131, 1142 to 1162, 1183 to 1203, and 1227 to 1247; these read FFLT…MYKA, IVYF…SFAG, VWDY…LAGI, FGLM…LSYL, ATGA…IISL, VDIV…LFLV, and GSPM…IMIL. The 236-residue stretch at 1293 to 1528 folds into the ABC transporter 2 domain; it reads LQFRNLHKLF…FGAGYTFDVK (236 aa). 1331–1338 contributes to the ATP binding site; it reads GLNGAGKT.

It belongs to the ABC transporter superfamily. ABCA family.

The protein localises to the membrane. This Dictyostelium discoideum (Social amoeba) protein is ABC transporter A family member 2 (abcA2).